We begin with the raw amino-acid sequence, 397 residues long: Elongation factor Tu (397 aa).

The tr-type G domain maps to 10–207 (LPHCNVGTIG…TLDSYIPQPE (198 aa)). Positions 19–26 (GHVDHGKT) are G1. 19-26 (GHVDHGKT) provides a ligand contact to GTP. Residue Thr-26 coordinates Mg(2+). Residues 60 to 64 (GITIN) are G2. Residues 81 to 84 (DCPG) form a G3 region. Residues 81-85 (DCPGH) and 136-139 (NKAD) contribute to the GTP site. The interval 136–139 (NKAD) is G4. The segment at 174-176 (SAR) is G5.

This sequence belongs to the TRAFAC class translation factor GTPase superfamily. Classic translation factor GTPase family. EF-Tu/EF-1A subfamily. Monomer.

Its subcellular location is the cytoplasm. It catalyses the reaction GTP + H2O = GDP + phosphate + H(+). Functionally, GTP hydrolase that promotes the GTP-dependent binding of aminoacyl-tRNA to the A-site of ribosomes during protein biosynthesis. The protein is Elongation factor Tu of Pseudomonas syringae pv. tomato (strain ATCC BAA-871 / DC3000).